Here is a 288-residue protein sequence, read N- to C-terminus: Elongation factor Ts (288 aa).

The interval 82–85 (TDFV) is involved in Mg(2+) ion dislocation from EF-Tu.

The protein belongs to the EF-Ts family.

Its subcellular location is the cytoplasm. Associates with the EF-Tu.GDP complex and induces the exchange of GDP to GTP. It remains bound to the aminoacyl-tRNA.EF-Tu.GTP complex up to the GTP hydrolysis stage on the ribosome. This chain is Elongation factor Ts, found in Chlorobaculum tepidum (strain ATCC 49652 / DSM 12025 / NBRC 103806 / TLS) (Chlorobium tepidum).